Here is a 185-residue protein sequence, read N- to C-terminus: Avirulence protein ATR39-1 (185 aa).

A signal peptide spans 1-20; it reads MVKCTPLLALTVIVSAGSDA. Residues 49 to 66 carry the RxLR-dEER motif; the sequence is RVLRASDVPDEVAAGESR.

This sequence belongs to the RxLR effector family.

The protein resides in the secreted. It localises to the host cell. Functionally, secreted effector that acts as an elicitor of hypersensitive response (HR) specifically on plants carrying defense protein RPP39. The allele ATR39-1 is recognized by RPP39, whereas the ATR39-2 allele is not recognized. The chain is Avirulence protein ATR39-1 from Hyaloperonospora arabidopsidis (strain Emoy2) (Downy mildew agent).